Here is a 173-residue protein sequence, read N- to C-terminus: Shikimate kinase (173 aa).

11 to 16 contributes to the ATP binding site; it reads GTGKTS. A Mg(2+)-binding site is contributed by Thr-15. Residues Asp-33, Arg-57, and Gly-79 each contribute to the substrate site. Arg-117 is an ATP binding site. Arg-136 is a binding site for substrate.

This sequence belongs to the shikimate kinase family. As to quaternary structure, monomer. Mg(2+) serves as cofactor.

It is found in the cytoplasm. It carries out the reaction shikimate + ATP = 3-phosphoshikimate + ADP + H(+). It functions in the pathway metabolic intermediate biosynthesis; chorismate biosynthesis; chorismate from D-erythrose 4-phosphate and phosphoenolpyruvate: step 5/7. In terms of biological role, catalyzes the specific phosphorylation of the 3-hydroxyl group of shikimic acid using ATP as a cosubstrate. The protein is Shikimate kinase of Thermodesulfovibrio yellowstonii (strain ATCC 51303 / DSM 11347 / YP87).